The primary structure comprises 502 residues: MMHSVSRLARRFCATLATATAEISGEAAASVPTKAKKHRSIYKKLSSLGTRGGGKMEETLNQFVMEGVPVKKHDLIRYAKDLRKFRQPQRALEIFEWMERKEIAFTGSDHAIRLNLIAKSKGLEAAETYFNSLDDSIKNQSTYGSLLNCYCVEKEEVKAKAHFENMVDLNHVSNSLPFNNLMAMYMGLGQPEKVPALVVAMKEKSITPCDITYSMWIQSCGSLKDLDGVEKVLDEMKAEGEGIFSWNTFANLAAIYIKVGLYGKAEEALKSLENNMNPDVRDCYHFLINLYTGIANASEVYRVWDLLKKRYPNVNNSSYLTMLRALSKLDDIDGVKKVFAEWESTCWTYDMRMANVAISSYLKQNMYEEAEAVFNGAMKKCKGQFSKARQLLMMHLLKNDQADLALKHFEAAVLDQDKNWTWSSELISSFFLHFEEAKDVDGAEEFCKTLTKWSPLSSETYTLLMKTYLAAGKACPDMKKRLEEQGILVDEEQECLLSKICP.

A mitochondrion-targeting transit peptide spans 1–13 (MMHSVSRLARRFC). PPR repeat units lie at residues 139–173 (NQSTYGSLLNCYCVEKEEVKAKAHFENMVDLNHVS), 174–208 (NSLPFNNLMAMYMGLGQPEKVPALVVAMKEKSITP), 209–243 (CDITYSMWIQSCGSLKDLDGVEKVLDEMKAEGEGI), 245–275 (SWNTFANLAAIYIKVGLYGKAEEALKSLENN), 280–310 (VRDCYHFLINLYTGIANASEVYRVWDLLKKR), 315–345 (NNSSYLTMLRALSKLDDIDGVKKVFAEWEST), and 350–381 (DMRMANVAISSYLKQNMYEEAEAVFNGAMKKC).

This sequence belongs to the PPR family. P subfamily.

The protein localises to the mitochondrion. In Arabidopsis thaliana (Mouse-ear cress), this protein is Pentatricopeptide repeat-containing protein At4g01990, mitochondrial.